The chain runs to 2157 residues: Genome polyprotein (2157 aa).

The N-myristoyl glycine; by host moiety is linked to residue G2. Residues 2–1470 (GAQVSRQNVG…DLSIANSIIT (1469 aa)) lie on the Cytoplasmic side of the membrane. An amphipathic alpha-helix region spans residues 567 to 584 (PIEQNPVENYIDEVLNEV). Residues H875 and D892 each act as for protease 2A activity in the active site. Zn(2+) is bound by residues C909 and C911. C963 functions as the For protease 2A activity in the catalytic mechanism. Zn(2+) contacts are provided by C969 and H971. The segment at 1095-1164 (SDSWLKKFTE…NLRAADNATQ (70 aa)) is membrane-binding. An oligomerization region spans residues 1095-1228 (SDSWLKKFTE…PPGTGKSITT (134 aa)). The tract at residues 1116–1120 (GNKIS) is RNA-binding. Positions 1188 to 1350 (EAKRIKVLYN…YKDAQGKLNV (163 aa)) constitute an SF3 helicase domain. Zn(2+) is bound by residues C1357, C1368, and C1373. The segment at 1357 to 1373 (CNVNTKIGNAKCCPFVC) adopts a C4-type; degenerate zinc-finger fold. Positions 1400–1407 (EDKRRRQV) are RNA-binding. The segment at 1411-1416 (MSAIFQ) is oligomerization. An intramembrane segment occupies 1471-1486 (IIANIISIAGIIFVIY). The Cytoplasmic portion of the chain corresponds to 1487–2157 (KLFCTLQGPY…LLKHEWYEKF (671 aa)). Y1496 carries the O-(5'-phospho-RNA)-tyrosine modification. Residues 1515-1693 (GPEEEFGRSI…FSAMLLRSYF (179 aa)) enclose the Peptidase C3 domain. Catalysis depends on for protease 3C activity residues H1554, E1585, and C1661. Residues 1925–2038 (DCIMAFDYTN…SYKYTLDMEA (114 aa)) form the RdRp catalytic domain. Residues D1931 and D2024 each contribute to the Mg(2+) site.

The protein belongs to the picornaviruses polyprotein family. In terms of assembly, interacts with capsid protein VP1 and capsid protein VP3 to form heterotrimeric protomers. Interacts with capsid protein VP0, and capsid protein VP3 to form heterotrimeric protomers. Five protomers subsequently associate to form pentamers which serve as building blocks for the capsid. Interacts with capsid protein VP2, capsid protein VP3 and capsid protein VP4 following cleavage of capsid protein VP0. As to quaternary structure, interacts with capsid protein VP1 and capsid protein VP3 in the mature capsid. In terms of assembly, interacts with capsid protein VP0 and capsid protein VP1 to form heterotrimeric protomers. Five protomers subsequently associate to form pentamers which serve as building blocks for the capsid. Interacts with capsid protein VP4 in the mature capsid. Interacts with protein 2C; this interaction may be important for virion morphogenesis. Interacts with capsid protein VP1 and capsid protein VP3. As to quaternary structure, homodimer. In terms of assembly, homohexamer; forms a hexameric ring structure with 6-fold symmetry characteristic of AAA+ ATPases. Interacts (via N-terminus) with host RTN3 (via reticulon domain); this interaction is important for viral replication. Interacts with capsid protein VP3; this interaction may be important for virion morphogenesis. Interacts with protein 3CD. As to quaternary structure, homodimer. Interacts with host GBF1. Interacts (via GOLD domain) with host ACBD3 (via GOLD domain); this interaction allows the formation of a viral protein 3A/ACBD3 heterotetramer with a 2:2 stoichiometry, which will stimulate the recruitment of host PI4KB in order to synthesize PI4P at the viral RNA replication sites. In terms of assembly, interacts with RNA-directed RNA polymerase. Interacts with protein 3AB and with RNA-directed RNA polymerase. As to quaternary structure, interacts with Viral protein genome-linked and with protein 3CD. It depends on Mg(2+) as a cofactor. In terms of processing, specific enzymatic cleavages in vivo by the viral proteases yield processing intermediates and the mature proteins. Myristoylation is required for the formation of pentamers during virus assembly. Further assembly of 12 pentamers and a molecule of genomic RNA generates the provirion. Post-translationally, during virion maturation, immature virions are rendered infectious following cleavage of VP0 into VP4 and VP2. This maturation seems to be an autocatalytic event triggered by the presence of RNA in the capsid and it is followed by a conformational change infectious virion. In terms of processing, myristoylation is required during RNA encapsidation and formation of the mature virus particle. VPg is uridylylated by the polymerase into VPg-pUpU. This acts as a nucleotide-peptide primer for the genomic RNA replication.

The protein resides in the virion. It localises to the host cytoplasm. Its subcellular location is the host cytoplasmic vesicle membrane. The protein localises to the host nucleus. The catalysed reaction is a ribonucleoside 5'-triphosphate + H2O = a ribonucleoside 5'-diphosphate + phosphate + H(+). It catalyses the reaction Selective cleavage of Tyr-|-Gly bond in the picornavirus polyprotein.. It carries out the reaction RNA(n) + a ribonucleoside 5'-triphosphate = RNA(n+1) + diphosphate. The enzyme catalyses Selective cleavage of Gln-|-Gly bond in the poliovirus polyprotein. In other picornavirus reactions Glu may be substituted for Gln, and Ser or Thr for Gly.. Replication or transcription is subject to high level of random mutations by the nucleotide analog ribavirin. Functionally, forms an icosahedral capsid of pseudo T=3 symmetry with capsid proteins VP2 and VP3. The capsid is 300 Angstroms in diameter, composed of 60 copies of each capsid protein and enclosing the viral positive strand RNA genome. Capsid protein VP1 mainly forms the vertices of the capsid. Capsid protein VP1 interacts with host cell receptor to provide virion attachment to target host cells. This attachment induces virion internalization. Tyrosine kinases are probably involved in the entry process. After binding to its receptor, the capsid undergoes conformational changes. Capsid protein VP1 N-terminus (that contains an amphipathic alpha-helix) and capsid protein VP4 are externalized. Together, they shape a pore in the host membrane through which viral genome is translocated to host cell cytoplasm. Forms an icosahedral capsid of pseudo T=3 symmetry with capsid proteins VP2 and VP3. The capsid is 300 Angstroms in diameter, composed of 60 copies of each capsid protein and enclosing the viral positive strand RNA genome. Its function is as follows. Lies on the inner surface of the capsid shell. After binding to the host receptor, the capsid undergoes conformational changes. Capsid protein VP4 is released, Capsid protein VP1 N-terminus is externalized, and together, they shape a pore in the host membrane through which the viral genome is translocated into the host cell cytoplasm. In terms of biological role, component of immature procapsids, which is cleaved into capsid proteins VP4 and VP2 after maturation. Allows the capsid to remain inactive before the maturation step. Functionally, cysteine protease that cleaves viral polyprotein and specific host proteins. It is responsible for the autocatalytic cleavage between the P1 and P2 regions, which is the first cleavage occurring in the polyprotein. Also cleaves the host translation initiation factor EIF4G1, in order to shut down the capped cellular mRNA translation. Inhibits the host nucleus-cytoplasm protein and RNA trafficking by cleaving host members of the nuclear pores. Counteracts stress granule formation probably by antagonizing its assembly or promoting its dissassembly. Plays an essential role in the virus replication cycle by acting as a viroporin. Creates a pore in the host endoplasmic reticulum and as a consequence releases Ca2+ in the cytoplasm of infected cell. In turn, high levels of cytoplasmic calcium may trigger membrane trafficking and transport of viral ER-associated proteins to viroplasms, sites of viral genome replication. Its function is as follows. Induces and associates with structural rearrangements of intracellular membranes. Displays RNA-binding, nucleotide binding and NTPase activities. May play a role in virion morphogenesis and viral RNA encapsidation by interacting with the capsid protein VP3. In terms of biological role, localizes the viral replication complex to the surface of membranous vesicles. Together with protein 3CD binds the Cis-Active RNA Element (CRE) which is involved in RNA synthesis initiation. Acts as a cofactor to stimulate the activity of 3D polymerase, maybe through a nucleid acid chaperone activity. Functionally, localizes the viral replication complex to the surface of membranous vesicles. It inhibits host cell endoplasmic reticulum-to-Golgi apparatus transport and causes the disassembly of the Golgi complex, possibly through GBF1 interaction. This would result in depletion of MHC, trail receptors and IFN receptors at the host cell surface. Plays an essential role in viral RNA replication by recruiting ACBD3 and PI4KB at the viral replication sites, thereby allowing the formation of the rearranged membranous structures where viral replication takes place. Acts as a primer for viral RNA replication and remains covalently bound to viral genomic RNA. VPg is uridylylated prior to priming replication into VPg-pUpU. The oriI viral genomic sequence may act as a template for this. The VPg-pUpU is then used as primer on the genomic RNA poly(A) by the RNA-dependent RNA polymerase to replicate the viral genome. During genome replication, the VPg-RNA linkage is removed by the host TDP2, thereby accelerating replication. During the late stage of the replication cycle, host TDP2 is excluded from sites of viral RNA synthesis and encapsidation, allowing for the generation of progeny virions. Its function is as follows. Involved in the viral replication complex and viral polypeptide maturation. It exhibits protease activity with a specificity and catalytic efficiency that is different from protease 3C. Protein 3CD lacks polymerase activity. Protein 3CD binds to the 5'UTR of the viral genome. In terms of biological role, replicates the viral genomic RNA on the surface of intracellular membranes. May form linear arrays of subunits that propagate along a strong head-to-tail interaction called interface-I. Covalently attaches UMP to a tyrosine of VPg, which is used to prime RNA synthesis. The positive stranded RNA genome is first replicated at virus induced membranous vesicles, creating a dsRNA genomic replication form. This dsRNA is then used as template to synthesize positive stranded RNA genomes. ss(+)RNA genomes are either translated, replicated or encapsidated. Functionally, major viral protease that mediates proteolytic processing of the polyprotein. Cleaves host EIF5B, contributing to host translation shutoff. Also cleaves host PABPC1, contributing to host translation shutoff. Cleaves host NLRP1, triggers host N-glycine-mediated degradation of the autoinhibitory NLRP1 N-terminal fragment. This chain is Genome polyprotein, found in Homo sapiens (Human).